The sequence spans 408 residues: Histidine--tRNA ligase (408 aa).

It belongs to the class-II aminoacyl-tRNA synthetase family. Homodimer.

It localises to the cytoplasm. The enzyme catalyses tRNA(His) + L-histidine + ATP = L-histidyl-tRNA(His) + AMP + diphosphate + H(+). The chain is Histidine--tRNA ligase from Campylobacter jejuni subsp. jejuni serotype O:2 (strain ATCC 700819 / NCTC 11168).